The chain runs to 375 residues: tRNA-specific 2-thiouridylase MnmA (375 aa).

ATP-binding positions include 20–27 (AMSGGVDS) and Leu46. Cys114 (nucleophile) is an active-site residue. Cysteines 114 and 211 form a disulfide. Gly138 serves as a coordination point for ATP. The interaction with tRNA stretch occupies residues 160-162 (RDQ). The active-site Cysteine persulfide intermediate is Cys211.

The protein belongs to the MnmA/TRMU family.

Its subcellular location is the cytoplasm. It carries out the reaction S-sulfanyl-L-cysteinyl-[protein] + uridine(34) in tRNA + AH2 + ATP = 2-thiouridine(34) in tRNA + L-cysteinyl-[protein] + A + AMP + diphosphate + H(+). In terms of biological role, catalyzes the 2-thiolation of uridine at the wobble position (U34) of tRNA, leading to the formation of s(2)U34. This Ruegeria pomeroyi (strain ATCC 700808 / DSM 15171 / DSS-3) (Silicibacter pomeroyi) protein is tRNA-specific 2-thiouridylase MnmA.